The following is a 903-amino-acid chain: Valine--tRNA ligase (903 aa).

A compositionally biased stretch (polar residues) spans 1-15 (MVCVTDQNNETTSQN). Residues 1-21 (MVCVTDQNNETTSQNRADKLP) form a disordered region. The 'HIGH' region motif lies at 61–71 (PNVTGQLHMGH). Positions 552–556 (KMSKS) match the 'KMSKS' region motif. Lys-555 provides a ligand contact to ATP. Positions 836–903 (TVDVAAERKR…RINKRLEELA (68 aa)) form a coiled coil.

This sequence belongs to the class-I aminoacyl-tRNA synthetase family. ValS type 1 subfamily. In terms of assembly, monomer.

It localises to the cytoplasm. It carries out the reaction tRNA(Val) + L-valine + ATP = L-valyl-tRNA(Val) + AMP + diphosphate. In terms of biological role, catalyzes the attachment of valine to tRNA(Val). As ValRS can inadvertently accommodate and process structurally similar amino acids such as threonine, to avoid such errors, it has a 'posttransfer' editing activity that hydrolyzes mischarged Thr-tRNA(Val) in a tRNA-dependent manner. This is Valine--tRNA ligase from Corynebacterium glutamicum (strain ATCC 13032 / DSM 20300 / JCM 1318 / BCRC 11384 / CCUG 27702 / LMG 3730 / NBRC 12168 / NCIMB 10025 / NRRL B-2784 / 534).